Reading from the N-terminus, the 317-residue chain is Aquaporin-2 (317 aa).

Over 1–75 the chain is Cytoplasmic; it reads MSLRDDLTIN…RSQEFKMQHR (75 aa). A helical transmembrane segment spans residues 76–96; the sequence is EFLAEFIGTLILVLLTCGFCA. Over 97-108 the chain is Extracellular; the sequence is EQTLNIEKSKSW. Residues 109-129 form a helical membrane-spanning segment; that stretch reads LTSSLGSGLSVLIGICVAGHV. The Cytoplasmic segment spans residues 130 to 154; sequence SGGHLNPAITIAFWVFSGFPIRKVP. The NPA 1 motif lies at 135–137; that stretch reads NPA. The chain crosses the membrane as a helical span at residues 155-175; the sequence is MYITAQLLGAFSGAALLYSIV. The Extracellular segment spans residues 176–208; the sequence is EPAISQFDHGKRQILGELGTAGIFGTYPPLYVG. The helical transmembrane segment at 209–229 threads the bilayer; the sequence is TGSAVASEVVGTAMLLLVVMV. The Cytoplasmic portion of the chain corresponds to 230 to 242; that stretch reads TGHPNNLPFRTAQ. The chain crosses the membrane as a helical span at residues 243–263; sequence GAMIALGVTTISLCIGYTSGF. At 264 to 295 the chain is on the extracellular side; sequence SLNPARDFGPRLFTAVAGWGIDVFTVHHYYAL. Positions 266–268 match the NPA 2 motif; the sequence is NPA. Residues 296 to 316 traverse the membrane as a helical segment; sequence VPMFAPILGGLAGGFIYTVFI. Position 317 (Asp317) is a topological domain, cytoplasmic.

Belongs to the MIP/aquaporin (TC 1.A.8) family.

Its subcellular location is the cell membrane. The catalysed reaction is H2O(in) = H2O(out). The enzyme catalyses glycerol(in) = glycerol(out). In terms of biological role, water channel required to facilitate the transport of water across membranes. Contributes to water uptake of spores during the early stages of spore germination. Aquaporins AQP1 and AQP2 act as extracellular pH sensors and enable the spores to hydrate under favorable conditions and to commence germination. Wounded vegetables and fruit present acidic pH, so the optimal pH range for germination is adapted to the relevant host pH. The polypeptide is Aquaporin-2 (Rhizopus delemar (strain RA 99-880 / ATCC MYA-4621 / FGSC 9543 / NRRL 43880) (Mucormycosis agent)).